The primary structure comprises 52 residues: MPQLDTIYILMTHLWAWLMLYLTTQKIKTFIMTSHPMIYHKPNKQTPTPTWL.

The chain crosses the membrane as a helical span at residues 10–30 (LMTHLWAWLMLYLTTQKIKTF).

Belongs to the ATPase protein 8 family. Component of the ATP synthase complex composed at least of ATP5F1A/subunit alpha, ATP5F1B/subunit beta, ATP5MC1/subunit c (homooctomer), MT-ATP6/subunit a, MT-ATP8/subunit 8, ATP5ME/subunit e, ATP5MF/subunit f, ATP5MG/subunit g, ATP5MK/subunit k, ATP5MJ/subunit j, ATP5F1C/subunit gamma, ATP5F1D/subunit delta, ATP5F1E/subunit epsilon, ATP5PF/subunit F6, ATP5PB/subunit b, ATP5PD/subunit d, ATP5PO/subunit OSCP. ATP synthase complex consists of a soluble F(1) head domain (subunits alpha(3) and beta(3)) - the catalytic core - and a membrane F(0) domain - the membrane proton channel (subunits c, a, 8, e, f, g, k and j). These two domains are linked by a central stalk (subunits gamma, delta, and epsilon) rotating inside the F1 region and a stationary peripheral stalk (subunits F6, b, d, and OSCP).

It is found in the mitochondrion membrane. Its function is as follows. Subunit 8, of the mitochondrial membrane ATP synthase complex (F(1)F(0) ATP synthase or Complex V) that produces ATP from ADP in the presence of a proton gradient across the membrane which is generated by electron transport complexes of the respiratory chain. ATP synthase complex consist of a soluble F(1) head domain - the catalytic core - and a membrane F(1) domain - the membrane proton channel. These two domains are linked by a central stalk rotating inside the F(1) region and a stationary peripheral stalk. During catalysis, ATP synthesis in the catalytic domain of F(1) is coupled via a rotary mechanism of the central stalk subunits to proton translocation. In vivo, can only synthesize ATP although its ATP hydrolase activity can be activated artificially in vitro. Part of the complex F(0) domain. This Lycodon semicarinatus (Ryukyu odd-tooth snake) protein is ATP synthase F(0) complex subunit 8.